The primary structure comprises 88 residues: HssA/B-like protein 11 (88 aa).

It belongs to the hssA/B family.

The sequence is that of HssA/B-like protein 11 (hssl11) from Dictyostelium discoideum (Social amoeba).